A 679-amino-acid chain; its full sequence is Glycine--tRNA ligase beta subunit (679 aa).

The protein belongs to the class-II aminoacyl-tRNA synthetase family. As to quaternary structure, tetramer of two alpha and two beta subunits.

The protein resides in the cytoplasm. The catalysed reaction is tRNA(Gly) + glycine + ATP = glycyl-tRNA(Gly) + AMP + diphosphate. The chain is Glycine--tRNA ligase beta subunit from Streptococcus pyogenes serotype M1.